Reading from the N-terminus, the 358-residue chain is Peptide chain release factor 1 (358 aa).

Gln-237 is subject to N5-methylglutamine.

It belongs to the prokaryotic/mitochondrial release factor family. Post-translationally, methylated by PrmC. Methylation increases the termination efficiency of RF1.

It is found in the cytoplasm. Its function is as follows. Peptide chain release factor 1 directs the termination of translation in response to the peptide chain termination codons UAG and UAA. The chain is Peptide chain release factor 1 from Mycoplasma mobile (strain ATCC 43663 / 163K / NCTC 11711) (Mesomycoplasma mobile).